A 197-amino-acid chain; its full sequence is Nucleoside triphosphate pyrophosphatase (197 aa).

The active-site Proton acceptor is D72.

This sequence belongs to the Maf family. The cofactor is a divalent metal cation.

It is found in the cytoplasm. The enzyme catalyses a ribonucleoside 5'-triphosphate + H2O = a ribonucleoside 5'-phosphate + diphosphate + H(+). It catalyses the reaction a 2'-deoxyribonucleoside 5'-triphosphate + H2O = a 2'-deoxyribonucleoside 5'-phosphate + diphosphate + H(+). Functionally, nucleoside triphosphate pyrophosphatase. May have a dual role in cell division arrest and in preventing the incorporation of modified nucleotides into cellular nucleic acids. The polypeptide is Nucleoside triphosphate pyrophosphatase (Corynebacterium efficiens (strain DSM 44549 / YS-314 / AJ 12310 / JCM 11189 / NBRC 100395)).